Here is a 273-residue protein sequence, read N- to C-terminus: BTB and MATH domain-containing protein 15 (273 aa).

Positions 7 to 123 (EFVFHHTFKD…DNSFTIEACV (117 aa)) constitute an MATH domain. A BTB domain is found at 147-206 (SDVILVVGDEKFYVLKLFLASHSSYFNALFLGKFKEADQSEVTLQNIDPTDFQSLLEVLY).

In terms of assembly, interacts with cul-3.

The protein operates within protein modification; protein ubiquitination. Probable substrate-specific adapter of an E3 ubiquitin-protein ligase complex which mediates the ubiquitination and subsequent proteasomal degradation of target proteins. In Caenorhabditis elegans, this protein is BTB and MATH domain-containing protein 15 (bath-15).